Here is a 589-residue protein sequence, read N- to C-terminus: MTVQTKTKGLAWQEKPLSDNERLKTESNFLRGTILDDLKDPLTGGFKGDNFQLIRFHGMYEQDDRDIRAERAEAKLEPLKFMLLRCRLPGGIIKPSQWIELDKFARENSHYRSIRLTNRQTFQFHGVPKAKLQTMHRLLHKLGLDSIATAADMNRNVLCTSNPIESELHRQAYEYAKKISEHLLPRTRGYLDVWVDGKKVQSSDDFLQEDEPILGKTYLPRKFKTAVVIPPLNDVDCYGNDLDFVAISDGNGQLAGFNVLAGGGLSMEHGNTKTYPNISLELGFVPPEHALKAAEAVVTTQRDFGNRSDRKNARTRYTIQNMGLDNFRAEVERRMGMPFEPIRPFKFTGRGDRIGWVKGIDGNWHLTLFIESGRLVDEGGKQLLTGVLEIAKIHKGDFRITANQNLIVANVAEADKAKIEELARTYGLIRNDVSKLRENAMSCVSFPTCPLAMAEAERVLPDFIDELDKIMAKHGTSDDYIVTRITGCPNGCGRAMLAEIGLVGKAVERYNLHIGGDREGVRIPRLYKENITLPEILAELDDLIGKWAAERNIGEGFGDFAIRTGIVKPVLNAPVDFWDVSKAVAIARA.

The [4Fe-4S] cluster site is built by Cys-443, Cys-449, Cys-488, and Cys-492. Cys-492 contributes to the siroheme binding site.

The protein belongs to the nitrite and sulfite reductase 4Fe-4S domain family. As to quaternary structure, alpha(8)-beta(8). The alpha component is a flavoprotein, the beta component is a hemoprotein. It depends on siroheme as a cofactor. [4Fe-4S] cluster is required as a cofactor.

It catalyses the reaction hydrogen sulfide + 3 NADP(+) + 3 H2O = sulfite + 3 NADPH + 4 H(+). It participates in sulfur metabolism; hydrogen sulfide biosynthesis; hydrogen sulfide from sulfite (NADPH route): step 1/1. Component of the sulfite reductase complex that catalyzes the 6-electron reduction of sulfite to sulfide. This is one of several activities required for the biosynthesis of L-cysteine from sulfate. This is Sulfite reductase [NADPH] hemoprotein beta-component from Neisseria meningitidis serogroup C (strain 053442).